Here is a 300-residue protein sequence, read N- to C-terminus: Ribosomal protein L11 methyltransferase (300 aa).

S-adenosyl-L-methionine-binding residues include T152, G173, D195, and N234.

This sequence belongs to the methyltransferase superfamily. PrmA family.

It is found in the cytoplasm. The catalysed reaction is L-lysyl-[protein] + 3 S-adenosyl-L-methionine = N(6),N(6),N(6)-trimethyl-L-lysyl-[protein] + 3 S-adenosyl-L-homocysteine + 3 H(+). Its function is as follows. Methylates ribosomal protein L11. In Burkholderia cenocepacia (strain HI2424), this protein is Ribosomal protein L11 methyltransferase.